A 398-amino-acid polypeptide reads, in one-letter code: Mu-type opioid receptor (398 aa).

Topologically, residues 1-66 are extracellular; sequence MDSSTGPGNT…CPQTGSPSMV (66 aa). N-linked (GlcNAc...) asparagine glycosylation is found at asparagine 9, asparagine 31, asparagine 38, asparagine 46, and asparagine 53. A helical membrane pass occupies residues 67–91; sequence TAITIMALYSIVCVVGLFGNFLVMY. The Cytoplasmic portion of the chain corresponds to 92–104; it reads VIVRYTKMKTATN. The helical transmembrane segment at 105-129 threads the bilayer; sequence IYIFNLALADALATSTLPFQSVNYL. Over 130–140 the chain is Extracellular; it reads MGTWPFGTILC. A disulfide bridge connects residues cysteine 140 and cysteine 217. Residues 141–163 form a helical membrane-spanning segment; it reads KIVISIDYYNMFTSIFTLCTMSV. Residues 164–183 lie on the Cytoplasmic side of the membrane; it reads DRYIAVCHPVKALDFRTPRN. Tyrosine 166 is subject to Phosphotyrosine. The chain crosses the membrane as a helical span at residues 184 to 205; it reads AKIVNVCNWILSSAIGLPVMFM. Over 206-228 the chain is Extracellular; the sequence is ATTKYRQGSIDCTLTFSHPTWYW. The helical transmembrane segment at 229–253 threads the bilayer; that stretch reads ENLLKICVFIFAFIMPVLIITVCYG. The Cytoplasmic segment spans residues 254–277; that stretch reads LMILRLKSVRMLSGSKEKDRNLRR. The chain crosses the membrane as a helical span at residues 278-304; sequence ITRMVLVVVAVFIVCWTPIHIYVIIKA. Topologically, residues 305–312 are extracellular; it reads LITIPETT. A helical membrane pass occupies residues 313–336; sequence FQTVSWHFCIALGYTNSCLNPVLY. The NPxxY; plays a role in stabilizing the activated conformation of the receptor motif lies at 332–336; the sequence is NPVLY. At 337 to 398 the chain is on the cytoplasmic side; that stretch reads AFLDENFKRC…NLEAETAPLP (62 aa). Residue cysteine 351 is the site of S-palmitoyl cysteine attachment. Residues 361–385 form a disordered region; sequence QNSTRVRQNTREHPSTANTVDRTNH. Phosphoserine is present on serine 363. Threonine 370 bears the Phosphothreonine mark. Serine 375 is subject to Phosphoserine. Threonine 394 carries the phosphothreonine modification.

It belongs to the G-protein coupled receptor 1 family. Forms homooligomers and heterooligomers with other GPCRs, such as OPRD1, OPRK1, OPRL1, NPFFR2, ADRA2A, SSTR2, CNR1 and CCR5 (probably in dimeric forms). Interacts with heterotrimeric G proteins; interaction with a heterotrimeric complex containing GNAI1, GNB1 and GNG2 stabilizes the active conformation of the receptor and increases its affinity for endomorphin-2, the synthetic opioid peptide DAMGO and for morphinan agonists. Interacts with PPL; the interaction disrupts agonist-mediated G-protein activation. Interacts (via C-terminus) with DNAJB4 (via C-terminus). Interacts with calmodulin; the interaction inhibits the constitutive activity of OPRM1; it abolishes basal and attenuates agonist-stimulated G-protein coupling. Interacts with FLNA, PLD2, RANBP9 and WLS and GPM6A. Interacts with RTP4. Interacts with SYP and GNAS. Interacts with RGS9, RGS17, RGS20, RGS4, PPP1R9B and HINT1. In terms of processing, phosphorylated. Differentially phosphorylated in basal and agonist-induced conditions. Agonist-mediated phosphorylation modulates receptor internalization. Phosphorylated by GRK2 in a agonist-dependent manner. Phosphorylation at Tyr-166 requires receptor activation, is dependent on non-receptor protein tyrosine kinase Src and results in a decrease in agonist efficacy by reducing G-protein coupling efficiency. Phosphorylated on tyrosine residues; the phosphorylation is involved in agonist-induced G-protein-independent receptor down-regulation. Phosphorylation at Ser-375 is involved in G-protein-dependent but not beta-arrestin-dependent activation of the ERK pathway. Ubiquitinated. A basal ubiquitination seems not to be related to degradation. Ubiquitination is increased upon formation of OPRM1:OPRD1 oligomers leading to proteasomal degradation; the ubiquitination is diminished by RTP4. As to expression, brain. Is expressed in the cerebral cortex, caudate putamen, nucleus accumbens, septal nuclei, thalamus, hippocampus, and habenula. Not detected in cerebellum.

The protein resides in the cell membrane. It is found in the cell projection. Its subcellular location is the axon. The protein localises to the perikaryon. It localises to the dendrite. The protein resides in the endosome. Functionally, receptor for endogenous opioids such as beta-endorphin and endomorphin. Receptor for natural and synthetic opioids including morphine, heroin, DAMGO, fentanyl, etorphine, buprenorphin and methadone. Also activated by enkephalin peptides, such as Met-enkephalin or Met-enkephalin-Arg-Phe, with higher affinity for Met-enkephalin-Arg-Phe. Agonist binding to the receptor induces coupling to an inactive GDP-bound heterotrimeric G-protein complex and subsequent exchange of GDP for GTP in the G-protein alpha subunit leading to dissociation of the G-protein complex with the free GTP-bound G-protein alpha and the G-protein beta-gamma dimer activating downstream cellular effectors. The agonist- and cell type-specific activity is predominantly coupled to pertussis toxin-sensitive G(i) and G(o) G alpha proteins, GNAI1, GNAI2, GNAI3 and GNAO1 isoforms Alpha-1 and Alpha-2, and to a lesser extent to pertussis toxin-insensitive G alpha proteins GNAZ and GNA15. They mediate an array of downstream cellular responses, including inhibition of adenylate cyclase activity and both N-type and L-type calcium channels, activation of inward rectifying potassium channels, mitogen-activated protein kinase (MAPK), phospholipase C (PLC), phosphoinositide/protein kinase (PKC), phosphoinositide 3-kinase (PI3K) and regulation of NF-kappa-B. Also couples to adenylate cyclase stimulatory G alpha proteins. The selective temporal coupling to G-proteins and subsequent signaling can be regulated by RGSZ proteins, such as RGS9, RGS17 and RGS4. Phosphorylation by members of the GPRK subfamily of Ser/Thr protein kinases and association with beta-arrestins is involved in short-term receptor desensitization. Beta-arrestins associate with the GPRK-phosphorylated receptor and uncouple it from the G-protein thus terminating signal transduction. The phosphorylated receptor is internalized through endocytosis via clathrin-coated pits which involves beta-arrestins. The activation of the ERK pathway occurs either in a G-protein-dependent or a beta-arrestin-dependent manner and is regulated by agonist-specific receptor phosphorylation. Acts as a class A G-protein coupled receptor (GPCR) which dissociates from beta-arrestin at or near the plasma membrane and undergoes rapid recycling. Receptor down-regulation pathways are varying with the agonist and occur dependent or independent of G-protein coupling. Endogenous ligands induce rapid desensitization, endocytosis and recycling. Heterooligomerization with other GPCRs can modulate agonist binding, signaling and trafficking properties. The chain is Mu-type opioid receptor (Oprm1) from Rattus norvegicus (Rat).